The following is a 95-amino-acid chain: Large ribosomal subunit protein uL23 (95 aa).

It belongs to the universal ribosomal protein uL23 family. As to quaternary structure, part of the 50S ribosomal subunit. Contacts protein L29, and trigger factor when it is bound to the ribosome.

One of the early assembly proteins it binds 23S rRNA. One of the proteins that surrounds the polypeptide exit tunnel on the outside of the ribosome. Forms the main docking site for trigger factor binding to the ribosome. The chain is Large ribosomal subunit protein uL23 from Desulfatibacillum aliphaticivorans.